The chain runs to 325 residues: Acetyl-coenzyme A carboxylase carboxyl transferase subunit alpha (325 aa).

In terms of domain architecture, CoA carboxyltransferase C-terminal spans arginine 38 to threonine 292.

This sequence belongs to the AccA family. In terms of assembly, acetyl-CoA carboxylase is a heterohexamer composed of biotin carboxyl carrier protein (AccB), biotin carboxylase (AccC) and two subunits each of ACCase subunit alpha (AccA) and ACCase subunit beta (AccD).

The protein localises to the cytoplasm. It catalyses the reaction N(6)-carboxybiotinyl-L-lysyl-[protein] + acetyl-CoA = N(6)-biotinyl-L-lysyl-[protein] + malonyl-CoA. Its pathway is lipid metabolism; malonyl-CoA biosynthesis; malonyl-CoA from acetyl-CoA: step 1/1. Inhibited by pyrrolidine dione antibiotics moiramide B (CPD1) and CPD2. Component of the acetyl coenzyme A carboxylase (ACC) complex. First, biotin carboxylase catalyzes the carboxylation of biotin on its carrier protein (BCCP) and then the CO(2) group is transferred by the carboxyltransferase to acetyl-CoA to form malonyl-CoA. The protein is Acetyl-coenzyme A carboxylase carboxyl transferase subunit alpha of Bacillus subtilis (strain 168).